Reading from the N-terminus, the 224-residue chain is Cytidylate kinase (224 aa).

Position 11 to 19 (11 to 19 (GPAGAGKST)) interacts with ATP.

It belongs to the cytidylate kinase family. Type 1 subfamily.

Its subcellular location is the cytoplasm. It catalyses the reaction CMP + ATP = CDP + ADP. It carries out the reaction dCMP + ATP = dCDP + ADP. This chain is Cytidylate kinase, found in Lysinibacillus sphaericus (strain C3-41).